The sequence spans 134 residues: Peroxisomal testis-specific protein 1 (134 aa).

The short motif at 131–134 (NHLL) is the Microbody targeting signal element.

It is found in the peroxisome. The sequence is that of Peroxisomal testis-specific protein 1 (PXT1) from Homo sapiens (Human).